We begin with the raw amino-acid sequence, 165 residues long: Alanine- and arginine-rich domain-containing protein (165 aa).

The segment at 136–165 (QQLKKRQDQERASKPQSPQDEEMNPECGNA) is disordered.

In Rattus norvegicus (Rat), this protein is Alanine- and arginine-rich domain-containing protein (Aard).